A 50-amino-acid polypeptide reads, in one-letter code: Sperm protamine P1 (50 aa).

2 disulfide bridges follow: Cys7–Cys15 and Cys39–Cys47.

Belongs to the protamine P1 family. As to quaternary structure, cross-linked by interchain disulfide bonds around the DNA-helix. As to expression, testis.

The protein resides in the nucleus. It localises to the chromosome. In terms of biological role, protamines substitute for histones in the chromatin of sperm during the haploid phase of spermatogenesis. They compact sperm DNA into a highly condensed, stable and inactive complex. This Oryctolagus cuniculus (Rabbit) protein is Sperm protamine P1 (PRM1).